The chain runs to 195 residues: IMP cyclohydrolase (195 aa).

It belongs to the archaeal IMP cyclohydrolase family.

The enzyme catalyses IMP + H2O = 5-formamido-1-(5-phospho-D-ribosyl)imidazole-4-carboxamide. The protein operates within purine metabolism; IMP biosynthesis via de novo pathway; IMP from 5-formamido-1-(5-phospho-D-ribosyl)imidazole-4-carboxamide: step 1/1. In terms of biological role, catalyzes the cyclization of 5-formylamidoimidazole-4-carboxamide ribonucleotide to IMP. This is IMP cyclohydrolase from Haloquadratum walsbyi (strain DSM 16790 / HBSQ001).